We begin with the raw amino-acid sequence, 373 residues long: LIM domain-binding protein 2 (373 aa).

Disordered stretches follow at residues 244-287 (APPA…KTPA) and 327-373 (QYDA…QASQ). Low complexity predominate over residues 263-280 (STSSTSNSSAGNTTNSAG). The LIM interaction domain (LID) domain occupies 298 to 337 (DVMVVGEPTLMGGEFGDEDERLITRLENTQYDAANGMDDE). Positions 341 to 373 (NNSPALGNNSPWNSKPPATQETKSENAPPQASQ) are enriched in polar residues.

Belongs to the LDB family. As to quaternary structure, interacts with LHX9. Interacts with SLK; leading to negatively regulate SLK kinase activity. Interacts with LMO4. In terms of assembly, interacts with PITX1. Interacts with LHX3. In terms of processing, ubiquitinated by RLIM/RNF12, leading to its degradation by the proteasome. Expressed in multiple tissues including heart, brain, liver, kidney, testis, lung and muscle, with expression highest in the brain, trigeminal ganglia, and lung.

The protein localises to the nucleus. Transcription cofactor. Binds to the LIM domain of a wide variety of LIM domain-containing transcription factors. Functionally, regulates the transcriptional activity of LIM-containing proteins such as LHX3 or PITX1. The sequence is that of LIM domain-binding protein 2 (Ldb2) from Mus musculus (Mouse).